A 146-amino-acid chain; its full sequence is FAD synthase (146 aa).

ATP-binding positions include 9–10 (TF), 14–17 (HPGH), and D92.

The protein belongs to the archaeal FAD synthase family. In terms of assembly, homodimer. A divalent metal cation serves as cofactor.

It catalyses the reaction FMN + ATP + H(+) = FAD + diphosphate. It functions in the pathway cofactor biosynthesis; FAD biosynthesis; FAD from FMN: step 1/1. In terms of biological role, catalyzes the transfer of the AMP portion of ATP to flavin mononucleotide (FMN) to produce flavin adenine dinucleotide (FAD) coenzyme. This is FAD synthase from Halobacterium salinarum (strain ATCC 29341 / DSM 671 / R1).